The primary structure comprises 490 residues: MSRMAEQQLYIHGGYTSATSGRTFETINPANGNVLATVQAAGREDVDRAVKSAQQGQKIWASMTAMERSRILRRAVDILRERNDELAKLETLDTGKAYSETSTVDIVTGADVLEYYAGLIPALEGSQIPLRETSFVYTRREPLGVVAGIGAWNYPIQIALWKSAPALAAGNAMIFKPSEVTPLTALKLAEIYSEAGLPDGVFNVLPGVGAETGQYLTEHPGIAKVSFTGGVASGKKVMANSAASSLKEVTMELGGKSPLIVFDDADLDLAADIAMMANFFSSGQVCTNGTRVFVPAKCKAAFEQKILARVERIRAGDVFDPQTNFGPLVSFPHRDNVLRYIAKGKEEGARVLCGGDVLKGDGFDNGAWVAPTVFTDCSDDMTIVREEIFGPVMSILTYESEDEVIRRANDTDYGLAAGIVTADLNRAHRVIHQLEAGICWINTWGESPAEMPVGGYKHSGIGRENGVMTLQSYTQVKSIQVEMAKFQSIF.

Residues T26, I27, and D93 each coordinate K(+). 150 to 152 is a binding site for NAD(+); sequence GAW. The active-site Charge relay system is K162. Residue 176-179 participates in NAD(+) binding; it reads KPSE. A K(+)-binding site is contributed by V180. Residue 230-233 coordinates NAD(+); sequence GVAS. L246 contacts K(+). The active-site Proton acceptor is the E252. Residues G254, C286, and E387 each coordinate NAD(+). The active-site Nucleophile is the C286. C286 carries the cysteine sulfenic acid (-SOH) modification. K(+) is bound by residues K457 and G460. E464 functions as the Charge relay system in the catalytic mechanism.

The protein belongs to the aldehyde dehydrogenase family. As to quaternary structure, dimer of dimers. Requires K(+) as cofactor.

It catalyses the reaction betaine aldehyde + NAD(+) + H2O = glycine betaine + NADH + 2 H(+). The protein operates within amine and polyamine biosynthesis; betaine biosynthesis via choline pathway; betaine from betaine aldehyde: step 1/1. Functionally, involved in the biosynthesis of the osmoprotectant glycine betaine. Catalyzes the irreversible oxidation of betaine aldehyde to the corresponding acid. This is Betaine aldehyde dehydrogenase from Escherichia coli (strain K12 / DH10B).